The sequence spans 175 residues: Large ribosomal subunit protein bL17 (175 aa).

The tract at residues 124-175 (VKKSKPTAPAQAVATKPAVEETREAAAAQPQEPEVEISEVKDPAEECEAKAD) is disordered. A compositionally biased stretch (basic and acidic residues) spans 161–175 (SEVKDPAEECEAKAD).

Belongs to the bacterial ribosomal protein bL17 family. In terms of assembly, part of the 50S ribosomal subunit. Contacts protein L32.

The sequence is that of Large ribosomal subunit protein bL17 from Geobacter sulfurreducens (strain ATCC 51573 / DSM 12127 / PCA).